The chain runs to 354 residues: Trans-L-3-hydroxyproline dehydratase (354 aa).

C104 acts as the Proton acceptor in catalysis. Residues 105–106 (GH), D269, and 274–275 (GS) each bind substrate.

The protein belongs to the proline racemase family. As to quaternary structure, homodimer.

It catalyses the reaction trans-3-hydroxy-L-proline = 1-pyrroline-2-carboxylate + H2O. Its function is as follows. Catalyzes the dehydration of trans-3-hydroxy-L-proline to delta-1-pyrroline-2-carboxylate (Pyr2C). The sequence is that of Trans-L-3-hydroxyproline dehydratase (L3hypdh) from Mus musculus (Mouse).